Reading from the N-terminus, the 652-residue chain is Putative glycine--tRNA ligase (652 aa).

A disordered region spans residues 119 to 145 (GDKEARGQNSNDQPEESDDKKKRKKKV). Residue Glu221 participates in glycine binding. ATP-binding positions include 253 to 255 (RNE) and 264 to 265 (RV). Glu272 contributes to the glycine binding site. 380 to 381 (EC) lines the ATP pocket. 499–501 (EPS) serves as a coordination point for glycine. Arg506 contacts ATP.

It belongs to the class-II aminoacyl-tRNA synthetase family. Homodimer.

The protein resides in the cytoplasm. It catalyses the reaction tRNA(Gly) + glycine + ATP = glycyl-tRNA(Gly) + AMP + diphosphate. The catalysed reaction is 2 ATP + H(+) = P(1),P(4)-bis(5'-adenosyl) tetraphosphate + diphosphate. Catalyzes the ATP-dependent ligation of glycine to the 3'-end of its cognate tRNA, via the formation of an aminoacyl-adenylate intermediate (Gly-AMP). Also produces diadenosine tetraphosphate (Ap4A), a universal pleiotropic signaling molecule needed for cell regulation pathways, by direct condensation of 2 ATPs. Thereby, may play a special role in Ap4A homeostasis. This Schizosaccharomyces pombe (strain 972 / ATCC 24843) (Fission yeast) protein is Putative glycine--tRNA ligase (grs1).